Reading from the N-terminus, the 478-residue chain is MKERSVSNFDIVIFGVTGNLSRKKLIPSLFNLFKNKCISNFRVIGFSRKIFTDKEFRLYIKDSLWQEETDSLIEIFLNFFVYVFGDFNEKESYKNLFKFLDRSRETIYYLSTSPAFYGPIINHLKKYFLSEKLTLSKIVLEKPFGSSLETAKKLNSLLYSAFKEDQIYRIDHYLGKETVQNIFTFRFGNSIFENIWNNRYVDFVQITVAEELGLDGRVEYYDSVGALKDMVQNHILQLLSLVAMESPIKFDSEFIHDEKVKVLKSLRKISKEDIKNYIVKGQYIGSQVQGVFKKGYKDETEFLGNSNTETYLAMKVFINNWRWSGVPFYLRTGKGLARKFSEIYIQFKKPSFTLFNNSSVDFSNALIFRIQPRDGIEIKFNTKKPGYNYEIQTANMEFSYHGAFKRLFDEAYERLLLDAFLGDGTLYATSDEIESSWEFVSDIANKWADIEICNYFYGSEGPKEIDSILEKDHFWRKI.

NADP(+)-binding positions include arginine 48, 86–87 (DF), and lysine 142. Substrate is bound by residues histidine 172, lysine 176, glutamate 210, and aspartate 229. The Proton acceptor role is filled by histidine 234. Substrate contacts are provided by lysine 334 and lysine 339.

Belongs to the glucose-6-phosphate dehydrogenase family.

The enzyme catalyses D-glucose 6-phosphate + NADP(+) = 6-phospho-D-glucono-1,5-lactone + NADPH + H(+). Its pathway is carbohydrate degradation; pentose phosphate pathway; D-ribulose 5-phosphate from D-glucose 6-phosphate (oxidative stage): step 1/3. In terms of biological role, catalyzes the oxidation of glucose 6-phosphate to 6-phosphogluconolactone. This is Glucose-6-phosphate 1-dehydrogenase from Borreliella burgdorferi (strain ATCC 35210 / DSM 4680 / CIP 102532 / B31) (Borrelia burgdorferi).